We begin with the raw amino-acid sequence, 90 residues long: Small ribosomal subunit protein uS19 (90 aa).

This sequence belongs to the universal ribosomal protein uS19 family.

Protein S19 forms a complex with S13 that binds strongly to the 16S ribosomal RNA. The protein is Small ribosomal subunit protein uS19 of Methylococcus capsulatus (strain ATCC 33009 / NCIMB 11132 / Bath).